Consider the following 167-residue polypeptide: Large ribosomal subunit protein bL9 (167 aa).

Belongs to the bacterial ribosomal protein bL9 family.

Binds to the 23S rRNA. This Nitratidesulfovibrio vulgaris (strain DSM 19637 / Miyazaki F) (Desulfovibrio vulgaris) protein is Large ribosomal subunit protein bL9.